A 282-amino-acid polypeptide reads, in one-letter code: Large ribosomal subunit protein uL2 (282 aa).

The segment at Ala-230–Lys-282 is disordered. Residues Arg-265–Lys-282 are compositionally biased toward basic residues.

The protein belongs to the universal ribosomal protein uL2 family. In terms of assembly, part of the 50S ribosomal subunit. Forms a bridge to the 30S subunit in the 70S ribosome.

Functionally, one of the primary rRNA binding proteins. Required for association of the 30S and 50S subunits to form the 70S ribosome, for tRNA binding and peptide bond formation. It has been suggested to have peptidyltransferase activity; this is somewhat controversial. Makes several contacts with the 16S rRNA in the 70S ribosome. This Desulfovibrio desulfuricans (strain ATCC 27774 / DSM 6949 / MB) protein is Large ribosomal subunit protein uL2.